A 711-amino-acid chain; its full sequence is Ribosomal RNA large subunit methyltransferase K/L (711 aa).

The THUMP domain occupies 43–154 (TLYRTLLWSR…RENLVISLDL (112 aa)).

This sequence belongs to the methyltransferase superfamily. RlmKL family.

It localises to the cytoplasm. The catalysed reaction is guanosine(2445) in 23S rRNA + S-adenosyl-L-methionine = N(2)-methylguanosine(2445) in 23S rRNA + S-adenosyl-L-homocysteine + H(+). It carries out the reaction guanosine(2069) in 23S rRNA + S-adenosyl-L-methionine = N(2)-methylguanosine(2069) in 23S rRNA + S-adenosyl-L-homocysteine + H(+). Specifically methylates the guanine in position 2445 (m2G2445) and the guanine in position 2069 (m7G2069) of 23S rRNA. This is Ribosomal RNA large subunit methyltransferase K/L from Haemophilus influenzae (strain ATCC 51907 / DSM 11121 / KW20 / Rd).